The primary structure comprises 691 residues: MGIRCSTWLRWPLSPQLLLLLLLCPTGSRAQDEDGDYEELMLALPSQEDSLVDEASHVATATFRRCSKEAWRLPGTYVVVLMEETQRLQVEQTAHRLQTWAARRGYVIKVLHVFYDLFPGFLVKMSSDLLGLALKLPHVEYIEEDSLVFAQSIPWNLERIIPAWQQTEEDSSPDGSSQVEVYLLDTSIQSGHREIEGRVTITDFNSVPEEDGTRFHRQASKCDSHGTHLAGVVSGRDAGVAKGTSLHSLRVLNCQGKGTVSGTLIGLEFIRKSQLIQPSGPLVVLLPLAGGYSRILNTACQRLARTGVVLVAAAGNFRDDACLYSPASAPEVITVGATNAQDQPVTLGTLGTNFGRCVDLFAPGKDIIGASSDCSTCYMSQSGTSQAAAHVAGIVAMMLNRDPALTLAELRQRLILFSTKDVINMAWFPEDQRVLTPNRVATLPPSTQETGGQLLCRTVWSAHSGPTRTATATARCAPEEELLSCSSFSRSGRRRGDRIEAIGGQQVCKALNAFGGEGVYAVARCCLLPRVNCSIHNTPAARAGPQTPVHCHQKDHVLTGCSFHWEVENLRAQQQPLLRSRHQPGQCVGHQEASVHASCCHAPGLECKIKEHGIAGPAEQVTVACEAGWTLTGCNVLPGASLPLGAYSVDNVCVARIRDAGRADRTSEEATVAAAICCRSRPSAKASWVHQ.

An N-terminal signal peptide occupies residues methionine 1 to alanine 30. A propeptide spanning residues glutamine 31–glutamine 151 is cleaved from the precursor. A Sulfotyrosine modification is found at tyrosine 37. Residue serine 46 is modified to Phosphoserine. Residues proline 154–alanine 441 form the Peptidase S8 domain. Active-site charge relay system residues include aspartate 185 and histidine 225. Intrachain disulfides connect cysteine 222/cysteine 254 and cysteine 322/cysteine 357. Catalysis depends on serine 385, which acts as the Charge relay system. The C-terminal domain stretch occupies residues glutamate 449 to glutamine 691. 3 disulfides stabilise this stretch: cysteine 456–cysteine 526, cysteine 476–cysteine 525, and cysteine 485–cysteine 508. Positions arginine 495–aspartate 497 match the Cell attachment site motif. A glycan (N-linked (GlcNAc...) asparagine) is linked at asparagine 532. 6 disulfide bridges follow: cysteine 533–cysteine 600, cysteine 551–cysteine 599, cysteine 561–cysteine 587, cysteine 607–cysteine 678, cysteine 625–cysteine 677, and cysteine 634–cysteine 653. At serine 687 the chain carries Phosphoserine.

The protein belongs to the peptidase S8 family. In terms of assembly, monomer. Can self-associate to form dimers and higher multimers which may have increased LDLR degrading activity. The precursor protein but not the mature protein may form multimers. Interacts with APOB, VLDLR, LRP8/APOER2 and BACE1. The full-length immature form (pro-PCSK9) interacts with SCNN1A, SCNN1B and SCNN1G. The pro-PCSK9 form (via C-terminal domain) interacts with LDLR. Interacts (via the C-terminal domain) with ANXA2 (via repeat Annexin 1); the interaction inhibits the degradation of LDLR. Ca(2+) is required as a cofactor. Post-translationally, cleavage by furin and PCSK5 generates a truncated inactive protein that is unable to induce LDLR degradation. Undergoes autocatalytic cleavage in the endoplasmic reticulum to release the propeptide from the N-terminus and the cleavage of the propeptide is strictly required for its maturation and activation. The cleaved propeptide however remains associated with the catalytic domain through non-covalent interactions, preventing potential substrates from accessing its active site. As a result, it is secreted from cells as a propeptide-containing, enzymatically inactive protein. In terms of processing, phosphorylation protects the propeptide against proteolysis. Highly expressed in 12-day embryo. In the adult, strongly expressed in liver, small intestine, jejunum, and to a lesser extent in kidney, lung, spleen and thymus. Expression in the liver is up-regulated following partial hepatectomy.

The protein localises to the cytoplasm. It is found in the secreted. It localises to the endosome. The protein resides in the lysosome. Its subcellular location is the cell surface. The protein localises to the endoplasmic reticulum. It is found in the golgi apparatus. Its activity is regulated as follows. Its proteolytic activity is autoinhibited by the non-covalent binding of the propeptide to the catalytic domain. Inhibited by EGTA. Crucial player in the regulation of plasma cholesterol homeostasis. Binds to low-density lipid receptor family members: low density lipoprotein receptor (LDLR), very low density lipoprotein receptor (VLDLR), apolipoprotein E receptor (LRP1/APOER) and apolipoprotein receptor 2 (LRP8/APOER2), and promotes their degradation in intracellular acidic compartments. Acts via a non-proteolytic mechanism to enhance the degradation of the hepatic LDLR through a clathrin LDLRAP1/ARH-mediated pathway. May prevent the recycling of LDLR from endosomes to the cell surface or direct it to lysosomes for degradation. Can induce ubiquitination of LDLR leading to its subsequent degradation. Inhibits intracellular degradation of APOB via the autophagosome/lysosome pathway in a LDLR-independent manner. Involved in the disposal of non-acetylated intermediates of BACE1 in the early secretory pathway. Inhibits epithelial Na(+) channel (ENaC)-mediated Na(+) absorption by reducing ENaC surface expression primarily by increasing its proteasomal degradation. Regulates neuronal apoptosis via modulation of LRP8/APOER2 levels and related anti-apoptotic signaling pathways. In Rattus norvegicus (Rat), this protein is Proprotein convertase subtilisin/kexin type 9 (Pcsk9).